Reading from the N-terminus, the 203-residue chain is MAEVSAQDLISQLSKSPESHKRKEYLHWDDYFMATSLLSAKRSKDPVTQVGACIVDSQNRIVAIGYNGFPRNCSDDVFPWSKAKKGSQEFDPLEDKKMYVVHAEANAILNSNGMSLSGTRLYTTLFPCNECAKLIIQVGISQVLYLSDKYADKPTYRASKRMLDAVGVEYKRHIPQKKTITIDFDTFPEEDPNASLGLNELHL.

Residues 27–163 (HWDDYFMATS…PTYRASKRML (137 aa)) enclose the CMP/dCMP-type deaminase domain. Residue H102 coordinates Zn(2+). Catalysis depends on E104, which acts as the Proton donor. Residues C128 and C131 each coordinate Zn(2+).

It belongs to the cytidine and deoxycytidylate deaminase family. Zn(2+) is required as a cofactor.

The enzyme catalyses dCMP + H2O + H(+) = dUMP + NH4(+). In terms of biological role, supplies the nucleotide substrate for thymidylate synthetase. The sequence is that of Probable deoxycytidylate deaminase from Drosophila melanogaster (Fruit fly).